We begin with the raw amino-acid sequence, 369 residues long: Phosphate acyltransferase (369 aa).

Positions 342-369 (ASRAPNSQTAGGERAAAVPQSAQLRMDS) are disordered.

Belongs to the PlsX family. In terms of assembly, homodimer. Probably interacts with PlsY.

Its subcellular location is the cytoplasm. The catalysed reaction is a fatty acyl-[ACP] + phosphate = an acyl phosphate + holo-[ACP]. The protein operates within lipid metabolism; phospholipid metabolism. Functionally, catalyzes the reversible formation of acyl-phosphate (acyl-PO(4)) from acyl-[acyl-carrier-protein] (acyl-ACP). This enzyme utilizes acyl-ACP as fatty acyl donor, but not acyl-CoA. The protein is Phosphate acyltransferase of Methylocella silvestris (strain DSM 15510 / CIP 108128 / LMG 27833 / NCIMB 13906 / BL2).